Consider the following 271-residue polypeptide: Co-chaperone protein DjlA (271 aa).

The Periplasmic portion of the chain corresponds to 1-6; sequence MQYWGK. The helical transmembrane segment at 7 to 31 threads the bilayer; that stretch reads IIGVAVALIMGGGFWGVVLGLLIGH. Over 32-271 the chain is Cytoplasmic; sequence MFDKARSRKM…ELIKQQKGFK (240 aa). The J domain maps to 205–271; the sequence is DACNVLGVKP…ELIKQQKGFK (67 aa).

Homodimer.

It is found in the cell inner membrane. Regulatory DnaK co-chaperone. Direct interaction between DnaK and DjlA is needed for the induction of the wcaABCDE operon, involved in the synthesis of a colanic acid polysaccharide capsule, possibly through activation of the RcsB/RcsC phosphotransfer signaling pathway. The colanic acid capsule may help the bacterium survive conditions outside the host. The polypeptide is Co-chaperone protein DjlA (Escherichia coli O6:H1 (strain CFT073 / ATCC 700928 / UPEC)).